Consider the following 142-residue polypeptide: Calmodulin-alpha (142 aa).

Alanine 2 carries the post-translational modification N-acetylalanine. EF-hand domains are found at residues 8-43 (EQIAEFKEAFSLFDKDGDGTITTKELGTVMRSLGQN), 44-79 (PTEAELQDMINEVDADGNGTIDFPEFLTMMARKMKD), 81-116 (DSEEEIREAFRVFDKDGNGYISAAELRHVMTNLGEK), and 117-142 (LTDEEVDEMIREADIDGDGQVNYEEF). Aspartate 21, aspartate 23, aspartate 25, threonine 27, glutamate 32, aspartate 57, aspartate 59, asparagine 61, threonine 63, glutamate 68, aspartate 94, aspartate 96, asparagine 98, tyrosine 100, and glutamate 105 together coordinate Ca(2+). Position 116 is an N6,N6,N6-trimethyllysine (lysine 116). The Ca(2+) site is built by aspartate 130, aspartate 132, aspartate 134, glutamine 136, and glutamate 141.

The protein belongs to the calmodulin family.

Calmodulin mediates the control of a large number of enzymes, ion channels and other proteins by Ca(2+). Among the enzymes to be stimulated by the calmodulin-Ca(2+) complex are a number of protein kinases and phosphatases. The chain is Calmodulin-alpha from Arbacia punctulata (Punctuate sea urchin).